We begin with the raw amino-acid sequence, 134 residues long: Major pollen allergen Lol p 11 (134 aa).

3 cysteine pairs are disulfide-bonded: C14/C85, C17/C127, and C38/C73. N-linked (GlcNAc...) asparagine glycosylation occurs at N24.

Belongs to the Ole e I family.

It localises to the secreted. The sequence is that of Major pollen allergen Lol p 11 from Lolium perenne (Perennial ryegrass).